Here is a 73-residue protein sequence, read N- to C-terminus: Translation initiation factor IF-1 (73 aa).

The 73-residue stretch at 1 to 73 (MPKKDGAIEI…TRGRIVYRYK (73 aa)) folds into the S1-like domain.

This sequence belongs to the IF-1 family. Component of the 30S ribosomal translation pre-initiation complex which assembles on the 30S ribosome in the order IF-2 and IF-3, IF-1 and N-formylmethionyl-tRNA(fMet); mRNA recruitment can occur at any time during PIC assembly.

It is found in the cytoplasm. In terms of biological role, one of the essential components for the initiation of protein synthesis. Stabilizes the binding of IF-2 and IF-3 on the 30S subunit to which N-formylmethionyl-tRNA(fMet) subsequently binds. Helps modulate mRNA selection, yielding the 30S pre-initiation complex (PIC). Upon addition of the 50S ribosomal subunit IF-1, IF-2 and IF-3 are released leaving the mature 70S translation initiation complex. The protein is Translation initiation factor IF-1 of Salinispora arenicola (strain CNS-205).